The following is a 538-amino-acid chain: Bifunctional purine biosynthesis protein PurH (538 aa).

An MGS-like domain is found at 6 to 158; it reads KHIPAPDLHR…KNHAYVATVV (153 aa).

The protein belongs to the PurH family.

It carries out the reaction (6R)-10-formyltetrahydrofolate + 5-amino-1-(5-phospho-beta-D-ribosyl)imidazole-4-carboxamide = 5-formamido-1-(5-phospho-D-ribosyl)imidazole-4-carboxamide + (6S)-5,6,7,8-tetrahydrofolate. It catalyses the reaction IMP + H2O = 5-formamido-1-(5-phospho-D-ribosyl)imidazole-4-carboxamide. It participates in purine metabolism; IMP biosynthesis via de novo pathway; 5-formamido-1-(5-phospho-D-ribosyl)imidazole-4-carboxamide from 5-amino-1-(5-phospho-D-ribosyl)imidazole-4-carboxamide (10-formyl THF route): step 1/1. It functions in the pathway purine metabolism; IMP biosynthesis via de novo pathway; IMP from 5-formamido-1-(5-phospho-D-ribosyl)imidazole-4-carboxamide: step 1/1. The chain is Bifunctional purine biosynthesis protein PurH from Brucella ovis (strain ATCC 25840 / 63/290 / NCTC 10512).